The primary structure comprises 413 residues: Variant surface glycoprotein YnAT 1.3 (413 aa).

Residues 1–22 form the signal peptide; that stretch reads MLDNSRARSIVHLLILLKAHVI. N-linked (GlcNAc...) asparagine glycosylation is found at N91, N361, and N379. Residue N379 is the site of GPI-anchor amidated asparagine attachment. A propeptide spans 380 to 413 (removed in mature form); that stretch reads SSNPTSRQNSVVQEPTTVSAAAITPLILPWTLLI.

It is found in the cell membrane. In terms of biological role, VSG forms a coat on the surface of the parasite. The trypanosome evades the immune response of the host by expressing a series of antigenically distinct VSGs from an estimated 1000 VSG genes. The polypeptide is Variant surface glycoprotein YnAT 1.3 (Trypanosoma congolense).